Here is a 3023-residue protein sequence, read N- to C-terminus: Genome polyprotein (3023 aa).

The span at methionine 1–asparagine 21 shows a compositional bias: basic residues. At serine 2 the chain carries N-acetylserine; by host. Residues serine 2 to lysine 23 form an interaction with STAT1 region. The segment at serine 2–proline 58 is interaction with EIF2AK2/PKR. Positions serine 2–arginine 59 are interaction with DDX3X. Residues serine 2–serine 75 are disordered. Residues serine 2–asparagine 168 lie on the Cytoplasmic side of the membrane. 2 consecutive short sequence motifs (nuclear localization signal) follow at residues proline 5–arginine 13 and proline 38–glutamine 43. Basic and acidic residues predominate over residues arginine 47–glutamine 57. Serine 53 is subject to Phosphoserine; by host. 2 consecutive short sequence motifs (nuclear localization signal) follow at residues proline 58–proline 64 and proline 66–arginine 71. The segment at proline 112–alanine 152 is important for endoplasmic reticulum and mitochondrial localization. Serine 116 carries the post-translational modification Phosphoserine; by host. Positions valine 122–serine 173 are interaction with APOA2. The segment at tyrosine 164 to glycine 167 is important for lipid droplets localization. Residues leucine 169–alanine 189 form a helical membrane-spanning segment. The propeptide at leucine 178 to serine 191 is ER anchor for the core protein, removed in mature form by host signal peptidase. At serine 190–glycine 359 the chain is on the lumenal side. Asparagine 196, asparagine 209, and asparagine 235 each carry an N-linked (GlcNAc...) asparagine; by host glycan. The tract at residues leucine 266–arginine 297 is important for fusion. An N-linked (GlcNAc...) asparagine; by host glycan is attached at asparagine 306. Residues leucine 360–serine 380 traverse the membrane as a helical segment. Over glycine 381–leucine 733 the chain is Lumenal. Residues threonine 386–glutamine 413 are HVR1. Residues asparagine 418, asparagine 424, and asparagine 431 are each glycosylated (N-linked (GlcNAc...) (high mannose) asparagine; by host). Intrachain disulfides connect cysteine 430/cysteine 554, cysteine 453/cysteine 460, cysteine 488/cysteine 496, and cysteine 505/cysteine 510. An N-linked (GlcNAc...) asparagine; by host glycan is attached at asparagine 449. The tract at residues alanine 476–glycine 480 is HVR2. N-linked (GlcNAc...) asparagine; by host glycosylation occurs at asparagine 477. The CD81-binding 1 stretch occupies residues serine 482–proline 495. N-linked (GlcNAc...) asparagine; by host glycosylation is present at asparagine 534. The CD81-binding 2 stretch occupies residues proline 546 to glycine 553. N-linked (GlcNAc...) asparagine; by host glycosylation is present at asparagine 558. Cystine bridges form between cysteine 566-cysteine 571, cysteine 589-cysteine 593, cysteine 605-cysteine 628, and cysteine 615-cysteine 652. N-linked (GlcNAc...) (high mannose) asparagine; by host glycans are attached at residues asparagine 631 and asparagine 653. Cysteine 660 and cysteine 685 are oxidised to a cystine. Residues serine 668 to aspartate 679 are PKR/eIF2-alpha phosphorylation homology domain (PePHD). Residues leucine 734–alanine 754 form a helical membrane-spanning segment. Residues alanine 755 to leucine 765 are Lumenal-facing. The chain crosses the membrane as a helical span at residues serine 766–isoleucine 786. Over arginine 787 to leucine 790 the chain is Cytoplasmic. Residues valine 791 to leucine 811 form a helical membrane-spanning segment. Topologically, residues proline 812–glutamate 821 are lumenal. A helical membrane pass occupies residues aspartate 822–tryptophan 842. Topologically, residues tyrosine 843–tyrosine 889 are cytoplasmic. A helical membrane pass occupies residues proline 890 to isoleucine 910. Positions leucine 907–leucine 1034 constitute a Peptidase C18 domain. Topologically, residues glutamine 911–alanine 936 are lumenal. The tract at residues alanine 912–arginine 1214 is protease NS2-3. Residue cysteine 930 is the site of S-palmitoyl cysteine; by host attachment. The chain crosses the membrane as a helical span at residues methionine 937 to leucine 957. Positions methionine 937–leucine 957 are interaction with host SCPS1. Residues tyrosine 958–threonine 1665 lie on the Cytoplasmic side of the membrane. Active-site for protease NS2 activity; shared with dimeric partner residues include histidine 960, glutamate 980, and cysteine 1001. The Peptidase S29 domain occupies serine 1035–proline 1216. Residues histidine 1091 and aspartate 1115 each act as charge relay system; for serine protease NS3 activity in the active site. Zn(2+) is bound by residues cysteine 1131 and cysteine 1133. Catalysis depends on serine 1173, which acts as the Charge relay system; for serine protease NS3 activity. Cysteine 1179 and histidine 1183 together coordinate Zn(2+). Residues proline 1225–serine 1377 form the Helicase ATP-binding domain. An ATP-binding site is contributed by alanine 1238 to serine 1245. Mg(2+) contacts are provided by serine 1245 and glutamate 1325. The short motif at aspartate 1324 to histidine 1327 is the DECH box element. A Helicase C-terminal domain is found at alanine 1387 to arginine 1546. Positions glutamine 1494–isoleucine 1506 are RNA-binding. The chain crosses the membrane as a helical span at residues serine 1666–glycine 1686. The tract at residues cysteine 1687–glycine 1698 is NS3-binding. Topologically, residues cysteine 1687–glutamine 1813 are cytoplasmic. The chain crosses the membrane as a helical span at residues threonine 1814–serine 1834. Residues serine 1835 to alanine 1836 are Lumenal-facing. The helical transmembrane segment at phenylalanine 1837–leucine 1857 threads the bilayer. Aspartate 1858 is a topological domain (cytoplasmic). Residues valine 1859–glycine 1879 traverse the membrane as a helical segment. Residues glutamate 1880 to asparagine 1889 are Lumenal-facing. A helical membrane pass occupies residues leucine 1890–leucine 1910. Over arginine 1911–cysteine 1980 the chain is Cytoplasmic. A lipid anchor (S-palmitoyl cysteine; by host) is attached at cysteine 1980. The stretch at asparagine 1981 to lysine 2010 is an intramembrane region. At valine 2011–arginine 3002 the chain is on the cytoplasmic side. Zn(2+) is bound by residues cysteine 2019, cysteine 2037, cysteine 2039, and cysteine 2060. The FKBP8-binding stretch occupies residues glutamate 2128–alanine 2216. A transcriptional activation region spans residues glutamate 2128–threonine 2340. Positions proline 2143–proline 2147 are interaction with non-structural protein 4A. A compositionally biased stretch (low complexity) spans alanine 2195–serine 2218. Residues alanine 2195–histidine 2226 are disordered. An interaction with host SKP2 region spans residues arginine 2197–glutamate 2450. 6 positions are modified to phosphoserine; by host: serine 2202, serine 2205, serine 2209, serine 2212, serine 2215, and serine 2218. Residues serine 2218–lysine 2257 are ISDR. The tract at residues serine 2218–phenylalanine 2283 is interaction with EIF2AK2/PKR. Residues lysine 2257–tyrosine 2314 are NS4B-binding. The V3 stretch occupies residues proline 2307–aspartate 2385. 2 disordered regions span residues histidine 2320 to aspartate 2344 and glutamate 2357 to serine 2422. The short motif at alanine 2330 to proline 2333 is the SH3-binding element. The Nuclear localization signal motif lies at proline 2335–leucine 2343. The segment covering glutamate 2366–glycine 2384 has biased composition (low complexity). 2 positions are modified to phosphoserine; by host: serine 2461 and serine 2474. Residues proline 2646–aspartate 2764 enclose the RdRp catalytic domain. 3 residues coordinate Mg(2+): aspartate 2652, aspartate 2750, and aspartate 2751. Residues histidine 3003–arginine 3023 traverse the membrane as a helical segment.

The protein belongs to the hepacivirus polyprotein family. In terms of assembly, homooligomer. Interacts with E1 (via C-terminus). Interacts with the non-structural protein 5A. Interacts (via N-terminus) with host STAT1 (via SH2 domain); this interaction results in decreased STAT1 phosphorylation and ubiquitin-mediated proteasome-dependent STAT1 degradation, leading to decreased IFN-stimulated gene transcription. Interacts with host STAT3; this interaction constitutively activates STAT3. Interacts with host LTBR receptor. Interacts with host TNFRSF1A receptor and possibly induces apoptosis. Interacts with host HNRPK. Interacts with host YWHAE. Interacts with host UBE3A/E6AP. Interacts with host DDX3X. Interacts with host APOA2. Interacts with host RXRA protein. Interacts with host SP110 isoform 3/Sp110b; this interaction sequesters the transcriptional corepressor SP110 away from the nucleus. Interacts with host CREB3 nuclear transcription protein; this interaction triggers cell transformation. Interacts with host ACY3. Interacts with host C1QR1. Interacts with host RBM24; this interaction, which enhances the interaction of the mature core protein with 5'-UTR, may inhibit viral translation and favor replication. Interacts with host EIF2AK2/PKR; this interaction induces the autophosphorylation of EIF2AK2. Part of the viral assembly initiation complex composed of NS2, E1, E2, NS3, NS4A, NS5A and the mature core protein. Forms a heterodimer with envelope glycoprotein E2. Interacts with mature core protein. Interacts with protease NS2. The heterodimer E1/E2 interacts with host CLDN1; this interaction plays a role in viral entry into host cell. Interacts with host SPSB2 (via C-terminus). Part of the viral assembly initiation complex composed of NS2, E1, E2, NS3, NS4A, NS5A and the mature core protein. Interacts with host NEURL3; this interaction prevents E1 binding to glycoprotein E2. As to quaternary structure, forms a heterodimer with envelope glycoprotein E1. Interacts with host CD81 and SCARB1 receptors; these interactions play a role in viral entry into host cell. Interacts with host EIF2AK2/PKR; this interaction inhibits EIF2AK2 and probably allows the virus to evade the innate immune response. Interacts with host CD209/DC-SIGN and CLEC4M/DC-SIGNR. Interact with host SPCS1; this interaction is essential for viral particle assembly. Interacts with protease NS2. The heterodimer E1/E2 interacts with host CLDN1; this interaction plays a role in viral entry into host cell. Part of the viral assembly initiation complex composed of NS2, E1, E2, NS3, NS4A, NS5A and the mature core protein. Interacts with host SLC3A2/4F2hc; the interaction may facilitate viral entry into host cell. Interacts with human PLSCR1. In terms of assembly, homohexamer. Homoheptamer. Interacts with protease NS2. Homodimer. Interacts with host SPCS1; this interaction is essential for viral particle assembly. Interacts with envelope glycoprotein E1. Interacts with envelope glycoprotein E2. Interacts with viroporin p7. Interacts with serine protease/helicase NS3. Part of the replication complex composed of NS2, NS3, NS4A, NS4B, NS5A and the RNA-directed RNA polymerase embedded in an ER-derived membranous web. Part of the viral assembly initiation complex composed of NS2, E1, E2, NS3, NS4A, NS5A and the mature core protein. As to quaternary structure, interacts with protease NS2. Interacts with non-structural protein 4A; this interaction stabilizes the folding of NS3 serine protease. NS3-NS4A interaction is essential for NS3 activation and allows membrane anchorage of the latter. NS3/NS4A complex also prevents phosphorylation of host IRF3, thus preventing the establishment of dsRNA induced antiviral state. Interacts with host MAVS; this interaction leads to the cleavage and inhibition of host MAVS. Interacts with host TICAM1; this interaction leads to the cleavage and inhibition of host TICAM1. Interacts with host TANK-binding kinase/TBK1; this interaction results in the inhibition of the association between TBK1 and IRF3, which leads to the inhibition of IRF3 activation. Interacts with host RBM24. Part of the replication complex composed of NS2, NS3, NS4A, NS4B, NS5A and the RNA-directed RNA polymerase embedded in an ER-derived membranous web. Part of the viral assembly initiation complex composed of NS2, E1, E2, NS3, NS4A, NS5A and the mature core protein. In terms of assembly, interacts with NS3 serine protease; this interaction stabilizes the folding of NS3 serine protease. NS3-NS4A interaction is essential for NS3 activation and allows membrane anchorage of the latter. Interacts with non-structural protein 5A (via N-terminus). Part of the replication complex composed of NS2, NS3, NS4A, NS4B, NS5A and the RNA-directed RNA polymerase embedded in an ER-derived membranous web. Part of the viral assembly initiation complex composed of NS2, E1, E2, NS3, NS4A, NS5A and the mature core protein. Homomultimer. Interacts with non-structural protein NS5A. Interacts with host PLA2G4C; this interaction likely initiates the recruitment of replication complexes to lipid droplets. Interacts with host STING; this interaction disrupts the interaction between STING and TBK1 thereby suppressing the interferon signaling. Part of the replication complex composed of NS2, NS3, NS4A, NS4B, NS5A and the RNA-directed RNA polymerase embedded in an ER-derived membranous web. As to quaternary structure, monomer. Homodimer; dimerization is required for RNA-binding. Interacts with the mature core protein. Interacts (via N-terminus) with non-structural protein 4A. Interacts with non-structural protein 4B. Interacts (via region D2) with RNA-directed RNA polymerase. Part of the viral assembly initiation complex composed of NS2, E1, E2, NS3, NS4A, NS5A and the mature core protein. Part of the replication complex composed of NS2, NS3, NS4A, NS4B, NS5A and the RNA-directed RNA polymerase embedded in an ER-derived membranous web. Interacts with host GRB2. Interacts with host BIN1. Interacts with host PIK3R1. Interacts with host SRCAP. Interacts with host FKBP8. Interacts (via C-terminus) with host VAPB (via MSP domain). Interacts with host EIF2AK2/PKR; this interaction leads to disruption of EIF2AK2 dimerization by NS5A and probably allows the virus to evade the innate immune response. Interacts (via N-terminus) with host PACSIN2 (via N-terminus); this interaction attenuates protein kinase C alpha-mediated phosphorylation of PACSIN2 by disrupting the interaction between PACSIN2 and PRKCA. Interacts (via N-terminus) with host SRC kinase (via SH2 domain). Interacts with most Src-family kinases. Interacts with host IFI27 and SKP2; promotes the ubiquitin-mediated proteasomal degradation of NS5A. Interacts with host GPS2. Interacts with host TNFRSF21; this interaction allows the modulation by the virus of JNK, p38 MAPK, STAT3, and Akt signaling pathways in a DR6-dependent manner. Interacts (via N-terminus) with host CIDEB (via N-terminus); this interaction seems to regulate the association of HCV particles with APOE. Interacts with host CHKA/Choline Kinase-alpha; CHKA bridges host PI4KA and NS5A and potentiates NS5A-stimulated PI4KA activity, which then facilitates the targeting of the ternary complex to the ER for viral replication. Interacts with host SPSB2 (via C-terminus); this interaction targets NS5A for ubiquitination and degradation. Interacts with host RAB18; this interaction may promote the association of NS5A and other replicase components with lipid droplets. Interacts (via region D2) with host PPIA/CYPA; the interaction stimulates RNA-binding ability of NS5A and is dependent on the peptidyl-prolyl cis-trans isomerase activity of PPIA/CYPA. Interacts with host TRIM14; this interaction induces the degradation of NS5A. In terms of assembly, homooligomer. Interacts with non-structural protein 5A. Interacts with host VAPB. Interacts with host PRK2/PKN2. Interacts with host HNRNPA1 and SEPT6; these interactions facilitate viral replication. Part of the replication complex composed of NS2, NS3, NS4A, NS4B, NS5A and the RNA-directed RNA polymerase. Zn(2+) is required as a cofactor. It depends on Mg(2+) as a cofactor. Specific enzymatic cleavages in vivo yield mature proteins. The structural proteins, core, E1, E2 and p7 are produced by proteolytic processing by host signal peptidases. The core protein precursor is synthesized as a 23 kDa, which is retained in the ER membrane through the hydrophobic signal peptide. Cleavage by the signal peptidase releases the 21 kDa mature core protein. The cleavage of the core protein precursor occurs between aminoacids 176 and 188 but the exact cleavage site is not known. Some degraded forms of the core protein appear as well during the course of infection. The other proteins (p7, NS2, NS3, NS4A, NS4B, NS5A and NS5B) are cleaved by the viral proteases. Autoprocessing between NS2 and NS3 is mediated by the NS2 cysteine protease catalytic domain and regulated by the NS3 N-terminal domain. Post-translationally, phosphorylated by host PKC and PKA. In terms of processing, ubiquitinated; mediated by UBE3A and leading to core protein subsequent proteasomal degradation. Highly N-glycosylated. Post-translationally, palmitoylation is required for NS2/3 autoprocessing and E2 recruitment to membranes. In terms of processing, palmitoylated. This modification may play a role in its polymerization or in protein-protein interactions. Phosphorylated on serines in a basal form termed p56. p58 is a hyperphosphorylated form of p56. p56 and p58 coexist in the cell in roughly equivalent amounts. Hyperphosphorylation is dependent on the presence of NS4A. Host CSNK1A1/CKI-alpha or RPS6KB1 kinases may be responsible for NS5A phosphorylation. Post-translationally, tyrosine phosphorylation is essential for the interaction with host SRC. In terms of processing, the N-terminus is phosphorylated by host PRK2/PKN2.

The protein localises to the host endoplasmic reticulum membrane. The protein resides in the host mitochondrion membrane. Its subcellular location is the virion. It localises to the host cytoplasm. It is found in the host nucleus. The protein localises to the host lipid droplet. The protein resides in the virion membrane. Its subcellular location is the host mitochondrion. It localises to the host cell membrane. It is found in the host perinuclear region. The catalysed reaction is Hydrolysis of four peptide bonds in the viral precursor polyprotein, commonly with Asp or Glu in the P6 position, Cys or Thr in P1 and Ser or Ala in P1'.. The enzyme catalyses a ribonucleoside 5'-triphosphate + H2O = a ribonucleoside 5'-diphosphate + phosphate + H(+). It carries out the reaction ATP + H2O = ADP + phosphate + H(+). It catalyses the reaction RNA(n) + a ribonucleoside 5'-triphosphate = RNA(n+1) + diphosphate. Inhibited by the antiviral drug hexamethylene amiloride. Inhibition by amantadine appears to be genotype-dependent. Also inhibited by long-alkyl-chain iminosugar derivatives. Its activity is regulated as follows. Activity is up-regulated by PRK2/PKN2-mediated phosphorylation. Packages viral RNA to form a viral nucleocapsid, and promotes virion budding. Participates in the viral particle production as a result of its interaction with the non-structural protein 5A. Binds RNA and may function as a RNA chaperone to induce the RNA structural rearrangements taking place during virus replication. Modulates viral translation initiation by interacting with viral IRES and 40S ribosomal subunit. Affects various cell signaling pathways, host immunity and lipid metabolism. Prevents the establishment of cellular antiviral state by blocking the interferon-alpha/beta (IFN-alpha/beta) and IFN-gamma signaling pathways and by blocking the formation of phosphorylated STAT1 and promoting ubiquitin-mediated proteasome-dependent degradation of STAT1. Activates STAT3 leading to cellular transformation. Regulates the activity of cellular genes, including c-myc and c-fos. May repress the promoter of p53, and sequester CREB3 and SP110 isoform 3/Sp110b in the cytoplasm. Represses cell cycle negative regulating factor CDKN1A, thereby interrupting an important check point of normal cell cycle regulation. Targets transcription factors involved in the regulation of inflammatory responses and in the immune response: suppresses TNF-induced NF-kappa-B activation, and activates AP-1. Binds to dendritic cells (DCs) via C1QR1, resulting in down-regulation of T-lymphocytes proliferation. Alters lipid metabolism by interacting with hepatocellular proteins involved in lipid accumulation and storage. Induces up-regulation of FAS promoter activity, and thereby contributes to the increased triglyceride accumulation in hepatocytes (steatosis). Functionally, forms a heterodimer with envelope glycoprotein E2, which mediates virus attachment to the host cell, virion internalization through clathrin-dependent endocytosis and fusion with host membrane. Fusion with the host cell is most likely mediated by both E1 and E2, through conformational rearrangements of the heterodimer required for fusion rather than a classical class II fusion mechanism. E1/E2 heterodimer binds host apolipoproteins such as APOB and ApoE thereby forming a lipo-viro-particle (LVP). APOE associated to the LVP allows the initial virus attachment to cell surface receptors such as the heparan sulfate proteoglycans (HSPGs), syndecan-1 (SDC1), syndecan-1 (SDC2), the low-density lipoprotein receptor (LDLR) and scavenger receptor class B type I (SCARB1). The cholesterol transfer activity of SCARB1 allows E2 exposure and binding of E2 to SCARB1 and the tetraspanin CD81. E1/E2 heterodimer binding on CD81 activates the epithelial growth factor receptor (EGFR) signaling pathway. Diffusion of the complex E1-E2-EGFR-SCARB1-CD81 to the cell lateral membrane allows further interaction with Claudin 1 (CLDN1) and occludin (OCLN) to finally trigger HCV entry. In terms of biological role, forms a heterodimer with envelope glycoprotein E1, which mediates virus attachment to the host cell, virion internalization through clathrin-dependent endocytosis and fusion with host membrane. Fusion with the host cell is most likely mediated by both E1 and E2, through conformational rearrangements of the heterodimer required for fusion rather than a classical class II fusion mechanism. The interaction between envelope glycoprotein E2 and host apolipoprotein E/APOE allows the proper assembly, maturation and infectivity of the viral particles. This interaction is probably promoted via the up-regulation of cellular autophagy by the virus. E1/E2 heterodimer binds host apolipoproteins such as APOB and APOE thereby forming a lipo-viro-particle (LVP). APOE associated to the LVP allows the initial virus attachment to cell surface receptors such as the heparan sulfate proteoglycans (HSPGs), syndecan-1 (SDC1), syndecan-1 (SDC2), the low-density lipoprotein receptor (LDLR) and scavenger receptor class B type I (SCARB1). The cholesterol transfer activity of SCARB1 allows E2 exposure and binding of E2 to SCARB1 and the tetraspanin CD81. E1/E2 heterodimer binding on CD81 activates the epithelial growth factor receptor (EGFR) signaling pathway. Diffusion of the complex E1-E2-EGFR-SCARB1-CD81 to the cell lateral membrane allows further interaction with Claudin 1 (CLDN1) and occludin (OCLN) to finally trigger HCV entry. Inhibits host EIF2AK2/PKR activation, preventing the establishment of an antiviral state. Viral ligand for CD209/DC-SIGN and CLEC4M/DC-SIGNR, which are respectively found on dendritic cells (DCs), and on liver sinusoidal endothelial cells and macrophage-like cells of lymph node sinuses. These interactions allow the capture of circulating HCV particles by these cells and subsequent facilitated transmission to permissive cells such as hepatocytes and lymphocyte subpopulations. The interaction between E2 and host amino acid transporter complex formed by SLC3A2 and SLC7A5/LAT1 may facilitate viral entry into host cell. Its function is as follows. Ion channel protein that acts as a viroporin and plays an essential role in the assembly, envelopment and secretion of viral particles. Regulates the host cell secretory pathway, which induces the intracellular retention of viral glycoproteins and favors assembly of viral particles. Creates a pore in acidic organelles and releases Ca(2+) and H(+) in the cytoplasm of infected cells, leading to a productive viral infection. High levels of cytoplasmic Ca(2+) may trigger membrane trafficking and transport of viral ER-associated proteins to viroplasms, sites of viral genome replication. This ionic imbalance induces the assembly of the inflammasome complex, which triggers the maturation of pro-IL-1beta into IL-1beta through the action of caspase-1. Targets also host mitochondria and induces mitochondrial depolarization. In addition of its role as a viroporin, acts as a lipid raft adhesion factor. Cysteine protease required for the proteolytic auto-cleavage between the non-structural proteins NS2 and NS3. The N-terminus of NS3 is required for the function of NS2 protease (active region NS2-3). Promotes the initiation of viral particle assembly by mediating the interaction between structural and non-structural proteins. Functionally, displays three enzymatic activities: serine protease with a chymotrypsin-like fold, NTPase and RNA helicase. NS3 serine protease, in association with NS4A, is responsible for the cleavages of NS3-NS4A, NS4A-NS4B, NS4B-NS5A and NS5A-NS5B. The NS3/NS4A complex prevents phosphorylation of host IRF3, thus preventing the establishment of dsRNA induced antiviral state. The NS3/NS4A complex induces host amino acid transporter component SLC3A2, thus contributing to HCV propagation. NS3 RNA helicase binds to RNA and unwinds both dsDNA and dsRNA in the 3' to 5' direction, and likely resolves RNA complicated stable secondary structures in the template strand. Binds a single ATP and catalyzes the unzipping of a single base pair of dsRNA. Inhibits host antiviral proteins TBK1 and IRF3 thereby preventing the establishment of an antiviral state. Cleaves host MAVS/CARDIF thereby preventing the establishment of an antiviral state. Cleaves host TICAM1/TRIF, thereby disrupting TLR3 signaling and preventing the establishment of an antiviral state. In terms of biological role, peptide cofactor which forms a non-covalent complex with the N-terminal of NS3 serine protease. The NS3/NS4A complex prevents phosphorylation of host IRF3, thus preventing the establishment of dsRNA induced antiviral state. The NS3/NS4A complex induces host amino acid transporter component SLC3A2, thus contributing to HCV propagation. Its function is as follows. Induces a specific membrane alteration that serves as a scaffold for the virus replication complex. This membrane alteration gives rise to the so-called ER-derived membranous web that contains the replication complex. NS4B self-interaction contributes to its function in membranous web formation. Promotes host TRIF protein degradation in a CASP8-dependent manner thereby inhibiting host TLR3-mediated interferon signaling. Disrupts the interaction between STING and TBK1 contributing to the inhibition of interferon signaling. Phosphorylated protein that is indispensable for viral replication and assembly. Both hypo- and hyperphosphorylated states are required for the viral life cycle. The hyperphosphorylated form of NS5A is an inhibitor of viral replication. Involved in RNA-binding and especially in binding to the viral genome. Zinc is essential for RNA-binding. Participates in the viral particle production as a result of its interaction with the mature viral core protein. Its interaction with host VAPB may target the viral replication complex to vesicles. Down-regulates viral IRES translation initiation. Mediates interferon resistance, presumably by interacting with and inhibiting host EIF2AK2/PKR. Prevents BIN1-induced apoptosis. Acts as a transcriptional activator of some host genes important for viral replication when localized in the nucleus. Via the interaction with host PACSIN2, modulates lipid droplet formation in order to promote virion assembly. Modulates TNFRSF21/DR6 signaling pathway for viral propagation. Functionally, RNA-dependent RNA polymerase that performs primer-template recognition and RNA synthesis during viral replication. Initiates RNA transcription/replication at a flavin adenine dinucleotide (FAD), resulting in a 5'- FAD cap on viral RNAs. In this way, recognition of viral 5' RNA by host pattern recognition receptors can be bypassed, thereby evading activation of antiviral pathways. In Homo sapiens (Human), this protein is Genome polyprotein.